Here is a 447-residue protein sequence, read N- to C-terminus: Tubulin beta-2 chain (447 aa).

GTP is bound by residues Gln11, Glu69, Ser138, Gly142, Thr143, Gly144, Asn204, and Asn226. Glu69 is a Mg(2+) binding site. Positions 419-428 are enriched in polar residues; sequence VSEYQQYQDA. The interval 419 to 447 is disordered; that stretch reads VSEYQQYQDATSDEEGEYEDEDQEPEEDM. Residues 429–447 are compositionally biased toward acidic residues; it reads TSDEEGEYEDEDQEPEEDM.

It belongs to the tubulin family. Dimer of alpha and beta chains. A typical microtubule is a hollow water-filled tube with an outer diameter of 25 nm and an inner diameter of 15 nM. Alpha-beta heterodimers associate head-to-tail to form protofilaments running lengthwise along the microtubule wall with the beta-tubulin subunit facing the microtubule plus end conferring a structural polarity. Microtubules usually have 13 protofilaments but different protofilament numbers can be found in some organisms and specialized cells. It depends on Mg(2+) as a cofactor.

Its subcellular location is the cytoplasm. The protein localises to the cytoskeleton. Tubulin is the major constituent of microtubules, a cylinder consisting of laterally associated linear protofilaments composed of alpha- and beta-tubulin heterodimers. Microtubules grow by the addition of GTP-tubulin dimers to the microtubule end, where a stabilizing cap forms. Below the cap, tubulin dimers are in GDP-bound state, owing to GTPase activity of alpha-tubulin. The protein is Tubulin beta-2 chain (TUBB2) of Triticum aestivum (Wheat).